A 258-amino-acid polypeptide reads, in one-letter code: Regulatory protein RecX (258 aa).

This sequence belongs to the RecX family.

It localises to the cytoplasm. In terms of biological role, modulates RecA activity. The polypeptide is Regulatory protein RecX (Streptococcus thermophilus (strain ATCC BAA-491 / LMD-9)).